The chain runs to 208 residues: Pyridoxine/pyridoxamine 5'-phosphate oxidase (208 aa).

FMN is bound by residues 53-58 (RTVLLK), 68-69 (YS), lysine 75, and glutamine 100. Position 58 (lysine 58) interacts with substrate. Residues tyrosine 118, arginine 122, and serine 126 each contribute to the substrate site. FMN is bound by residues 135-136 (QS) and tryptophan 180. 186–188 (RLH) provides a ligand contact to substrate. Residue arginine 190 coordinates FMN.

This sequence belongs to the pyridoxamine 5'-phosphate oxidase family. Homodimer. The cofactor is FMN.

The enzyme catalyses pyridoxamine 5'-phosphate + O2 + H2O = pyridoxal 5'-phosphate + H2O2 + NH4(+). It carries out the reaction pyridoxine 5'-phosphate + O2 = pyridoxal 5'-phosphate + H2O2. The protein operates within cofactor metabolism; pyridoxal 5'-phosphate salvage; pyridoxal 5'-phosphate from pyridoxamine 5'-phosphate: step 1/1. Its pathway is cofactor metabolism; pyridoxal 5'-phosphate salvage; pyridoxal 5'-phosphate from pyridoxine 5'-phosphate: step 1/1. Functionally, catalyzes the oxidation of either pyridoxine 5'-phosphate (PNP) or pyridoxamine 5'-phosphate (PMP) into pyridoxal 5'-phosphate (PLP). This chain is Pyridoxine/pyridoxamine 5'-phosphate oxidase, found in Xylella fastidiosa (strain Temecula1 / ATCC 700964).